Consider the following 1260-residue polypeptide: MEGQRGSNSSLSSGNGTEVATDVSSCFYVPNPSGTDFDAESSSLPPLSPAPQVALSIPAELAAAIPLIDRFQVEAFLRLMQKQIQSAGKRGFFYSKKSSGSNVRERFTFEDMLCFQKDPIPTSLLKINSDLVSRATKLFHLILKYMGVDSSDRSTPPSLDERIDLVGKLFKKTLKRVELRDELFAQISKQTRHNPDRQYLIKAWELMYLCASSMPPSKDIGGYLSEYIHNVAHDATIEPDAQVLAVNTLKALKRSIKAGPRHTTPGREEIEALLTGRKLTTIVFFLDETFEEISYDMATTVSDAVEELAGTIKLSAFSSFSLFECRKVVSSSKSSDPGNEEYIGLDDNKYIGDLLAEFKAIKDRNKGEILHCKLVFKKKLFRESDEAVTDLMFVQLSYVQLQHDYLLGNYPVGRDDAAQLCALQILVGIGFVNSPESCIDWTSLLERFLPRQIAITRAKREWELDILARYRSMENVTKDDARQQFLRILKALPYGNSVFFSVRKIDDPIGLLPGRIILGINKRGVHFFRPVPKEYLHSAELRDIMQFGSSNTAVFFKMRVAGVLHIFQFETKQGEEICVALQTHINDVMLRRYSKARSAANSLVNGDISCSSKPQNFEVYEKRLQDLSKAYEESQKKIEKLMDEQQEKNQQEVTLREELEAIHNGLELERRKLLEVTLDRDKLRSLCDEKGTTIQSLMSELRGMEARLAKSGNTKSSKETKSELAEMNNQILYKIQKELEVRNKELHVAVDNSKRLLSENKILEQNLNIEKKKKEEVEIHQKRYEQEKKVLKLRVSELENKLEVLAQDLDSAESTIESKNSDMLLLQNNLKELEELREMKEDIDRKNEQTAAILKMQGAQLAELEILYKEEQVLRKRYYNTIEDMKGKIRVYCRIRPLNEKESSEREKQMLTTVDEFTVEHPWKDDKRKQHIYDRVFDMRASQDDIFEDTKYLVQSAVDGYNVCIFAYGQTGSGKTFTIYGHESNPGLTPRATKELFNILKRDSKRFSFSLKAYMVELYQDTLVDLLLPKSARRLKLEIKKDSKGMVFVENVTTIPISTLEELRMILERGSERRHVSGTNMNEESSRSHLILSVVIESIDLQTQSAARGKLSFVDLAGSERVKKSGSAGCQLKEAQSINKSLSALGDVIGALSSGNQHIPYRNHKLTMLMSDSLGGNAKTLMFVNVSPAESNLDETYNSLLYASRVRTIVNDPSKHISSKEMVRLKKLVAYWKEQAGKKGEEEDLVDIEEDRTRKDEADS.

In terms of domain architecture, MyTH4 spans 115–274 (FQKDPIPTSL…PGREEIEALL (160 aa)). Positions 279-593 (LTTIVFFLDE…HINDVMLRRY (315 aa)) constitute an FERM domain. Coiled coils occupy residues 615–676 (QNFE…LLEV) and 753–853 (SKRL…TAAI). In terms of domain architecture, Kinesin motor spans 888–1209 (KIRVYCRIRP…LLYASRVRTI (322 aa)). Residue 972–977 (GSGKTF) coordinates ATP. Positions 1217–1239 (ISSKEMVRLKKLVAYWKEQAGKK) are calmodulin-binding. Residues 1221-1260 (EMVRLKKLVAYWKEQAGKKGEEEDLVDIEEDRTRKDEADS) form a homodimerization domain region. The tract at residues 1236–1260 (AGKKGEEEDLVDIEEDRTRKDEADS) is disordered. The span at 1251–1260 (DRTRKDEADS) shows a compositional bias: basic and acidic residues.

This sequence belongs to the TRAFAC class myosin-kinesin ATPase superfamily. Kinesin family. KIN-14 subfamily. In terms of assembly, homodimer (via C-terminus). Binds microtubules via its N-terminus containing the MyTH4 domain and binds F-actin via its FERM domain. Interacts with KIPK1. Interacts with KIPK2. Interacts with AN. Interacts with AIR9. Interacts (via C-terminus) with KIC, CAM2, CAM4 and CAM6. KIC and calmodulin show competitive binding to KCBP. Binding to calmodulin inhibits microtubule binding activity. Binding to KIC inhibits microtubule binding activity and microtubule-stimulated ATPase activity. Widely expressed with the highest levels in flowers. Strongly expressed in the root tip. Highly detected in the branch apex of the trichome.

It is found in the cytoplasm. The protein resides in the cell cortex. Its subcellular location is the cytoskeleton. The protein localises to the spindle. It localises to the phragmoplast. Its function is as follows. Minus-end microtubule-dependent motor protein involved in the regulation of cell division and trichome morphogenesis through microtubules bundling. Possesses basal and microtubule-stimulated ATPase activities. Acts as a hub that brings together microtubules and actin filaments to modulate the cytoskeleton during trichome formation and morphogenesis. Could be involved in the negative regulation of root growth. This Arabidopsis thaliana (Mouse-ear cress) protein is Kinesin-like protein KIN-14E.